Here is a 480-residue protein sequence, read N- to C-terminus: Bifunctional protein HldE (480 aa).

A ribokinase region spans residues 1–316; it reads MNMHDFSKTK…EQLNASMRHQ (316 aa). Residue 192-195 coordinates ATP; it reads NQGE. D261 is a catalytic residue. A cytidylyltransferase region spans residues 342–480; it reads FTNGCFDLLH…EAEIKEGAAQ (139 aa).

The protein in the N-terminal section; belongs to the carbohydrate kinase PfkB family. This sequence in the C-terminal section; belongs to the cytidylyltransferase family. Homodimer.

The catalysed reaction is D-glycero-beta-D-manno-heptose 7-phosphate + ATP = D-glycero-beta-D-manno-heptose 1,7-bisphosphate + ADP + H(+). The enzyme catalyses D-glycero-beta-D-manno-heptose 1-phosphate + ATP + H(+) = ADP-D-glycero-beta-D-manno-heptose + diphosphate. It participates in nucleotide-sugar biosynthesis; ADP-L-glycero-beta-D-manno-heptose biosynthesis; ADP-L-glycero-beta-D-manno-heptose from D-glycero-beta-D-manno-heptose 7-phosphate: step 1/4. The protein operates within nucleotide-sugar biosynthesis; ADP-L-glycero-beta-D-manno-heptose biosynthesis; ADP-L-glycero-beta-D-manno-heptose from D-glycero-beta-D-manno-heptose 7-phosphate: step 3/4. Functionally, catalyzes the phosphorylation of D-glycero-D-manno-heptose 7-phosphate at the C-1 position to selectively form D-glycero-beta-D-manno-heptose-1,7-bisphosphate. In terms of biological role, catalyzes the ADP transfer from ATP to D-glycero-beta-D-manno-heptose 1-phosphate, yielding ADP-D-glycero-beta-D-manno-heptose. In Hydrogenovibrio crunogenus (strain DSM 25203 / XCL-2) (Thiomicrospira crunogena), this protein is Bifunctional protein HldE.